The primary structure comprises 374 residues: NAD-capped RNA hydrolase ndx-9 (374 aa).

Zn(2+) is bound by residues cysteine 181, cysteine 184, cysteine 199, and cysteine 202. Residues tyrosine 207, 243–245 (AGF), glutamate 259, glutamate 263, and glutamate 307 each bind substrate. One can recognise a Nudix hydrolase domain in the interval 208–336 (PTFSPVSITL…LADPLLKNLP (129 aa)). Mg(2+)-binding residues include alanine 243, glutamate 259, glutamate 263, and glutamate 307. A Nudix box motif is present at residues 244 to 265 (GFAHSGESMAECARREIAEEVG). Positions 367–369 (LEN) match the Microbody targeting signal motif.

Belongs to the Nudix hydrolase family. NudC subfamily. As to quaternary structure, homodimer. It depends on Mg(2+) as a cofactor. The cofactor is Mn(2+). Requires Zn(2+) as cofactor.

The catalysed reaction is a 5'-end NAD(+)-phospho-ribonucleoside in mRNA + H2O = a 5'-end phospho-adenosine-phospho-ribonucleoside in mRNA + beta-nicotinamide D-ribonucleotide + 2 H(+). The enzyme catalyses NAD(+) + H2O = beta-nicotinamide D-ribonucleotide + AMP + 2 H(+). It carries out the reaction NADH + H2O = reduced beta-nicotinamide D-ribonucleotide + AMP + 2 H(+). Its function is as follows. mRNA decapping enzyme that specifically removes the nicotinamide adenine dinucleotide (NAD) cap from a subset of mRNAs by hydrolyzing the diphosphate linkage to produce nicotinamide mononucleotide (NMN) and 5' monophosphate mRNA. The NAD-cap is present at the 5'-end of some RNAs; in contrast to the canonical N7 methylguanosine (m7G) cap, the NAD cap promotes mRNA decay. Mediates the hydrolysis of some nucleoside diphosphate derivatives. In Caenorhabditis elegans, this protein is NAD-capped RNA hydrolase ndx-9 (ndx-9).